The chain runs to 402 residues: Putative F-box protein At1g70970 (402 aa).

One can recognise an F-box domain in the interval 4–52 (SSSETLHVEDLQTEIMSWLPLKSLLRFVIVSKKWASIIRGEQFKALYLR).

The sequence is that of Putative F-box protein At1g70970 from Arabidopsis thaliana (Mouse-ear cress).